A 676-amino-acid polypeptide reads, in one-letter code: E3 ubiquitin-protein ligase ICP0 (676 aa).

The segment at 13–52 (CCICLDAITGAARALPCLHAFCLACIRRWLEGRPTCPLCK) adopts an RING-type zinc-finger fold. Disordered regions lie at residues 101-153 (DLTA…GGRA), 266-517 (HLIP…AGAQ), and 555-676 (AAIS…AWRQ). Positions 123 to 153 (EAGGGAGGAEEAGEARGAGAGRAAGAAGGRA) are enriched in gly residues. The span at 286–303 (SDSDSEGSEDDSWSESEE) shows a compositional bias: acidic residues. Residues 304-314 (SSSGLSTSDLT) are compositionally biased toward low complexity. Over residues 315–328 (AIDDTETEPETDAE) the composition is skewed to acidic residues. The segment covering 351 to 361 (YVSTRGRQTPA) has biased composition (polar residues). Low complexity-rich tracts occupy residues 375–388 (GRAAAVSAPPSSRS) and 397–411 (LPAAPRAAPAAQARA). A compositionally biased stretch (gly residues) spans 422–439 (GAGLGVAAGETAGWGAGS). The segment covering 440–450 (EEGRGERRARL) has biased composition (basic and acidic residues). Over residues 474–484 (TPAPAPAPAPA) the composition is skewed to pro residues. A compositionally biased stretch (low complexity) spans 555-597 (AAISTRAPTPSPAGRAPAADPRRAGAPALAGAARAEVGRNGNP).

This sequence belongs to the simplexviruses ICp0 family. Auto-ubiquitinated. In terms of processing, transactivation activity is possibly regulated through phosphorylation by casein kinase II.

It catalyses the reaction S-ubiquitinyl-[E2 ubiquitin-conjugating enzyme]-L-cysteine + [acceptor protein]-L-lysine = [E2 ubiquitin-conjugating enzyme]-L-cysteine + N(6)-ubiquitinyl-[acceptor protein]-L-lysine.. Functionally, evades nuclear antiviral defenses triggered by dsDNA viruses. Acts during the initial stages of lytic infection and the reactivation of latent viral genome. Prevents the antiviral effect of nuclear bodies by degrading host PML and SP100. This is E3 ubiquitin-protein ligase ICP0 (BICP0) from Bovine herpesvirus 1.1 (strain Cooper) (BoHV-1).